Reading from the N-terminus, the 456-residue chain is CBL-interacting protein kinase 16 (456 aa).

Residues 22–277 (YELGRLLGQG…IPEIMRTPWF (256 aa)) form the Protein kinase domain. Residues 28 to 36 (LGQGTFAKV) and Lys51 contribute to the ATP site. The active-site Proton acceptor is Asp145. Residues 163 to 192 (DFGLAALPEQLRQDGLLHTQCGTPAYVAPE) form an activation loop region. Positions 309–335 (AMSPRTCNAFQLISSMSSGFDLSGMFE) constitute an NAF domain. The interval 339–368 (KAATVFTSRAPAATVIQKLEAVGRSLGYSA) is PPI.

The protein belongs to the protein kinase superfamily. CAMK Ser/Thr protein kinase family. SNF1 subfamily. Requires Mn(2+) as cofactor.

It carries out the reaction L-seryl-[protein] + ATP = O-phospho-L-seryl-[protein] + ADP + H(+). The enzyme catalyses L-threonyl-[protein] + ATP = O-phospho-L-threonyl-[protein] + ADP + H(+). In terms of biological role, CIPK serine-threonine protein kinases interact with CBL proteins. Binding of a CBL protein to the regulatory NAF domain of CIPK protein lead to the activation of the kinase in a calcium-dependent manner. In Oryza sativa subsp. japonica (Rice), this protein is CBL-interacting protein kinase 16 (CIPK16).